The following is a 206-amino-acid chain: Uridine kinase (206 aa).

An ATP-binding site is contributed by 11–18 (GGTGSGKS).

The protein belongs to the uridine kinase family.

It localises to the cytoplasm. It catalyses the reaction uridine + ATP = UMP + ADP + H(+). The enzyme catalyses cytidine + ATP = CMP + ADP + H(+). The protein operates within pyrimidine metabolism; CTP biosynthesis via salvage pathway; CTP from cytidine: step 1/3. Its pathway is pyrimidine metabolism; UMP biosynthesis via salvage pathway; UMP from uridine: step 1/1. This Clostridium botulinum (strain Kyoto / Type A2) protein is Uridine kinase.